A 392-amino-acid polypeptide reads, in one-letter code: 2-oxoisovalerate dehydrogenase subunit beta, mitochondrial (392 aa).

Residues 1–50 constitute a mitochondrion transit peptide; sequence MAAVAAFAGWLLRLRAAGADGPWRRLCGAGLSRGFLQSASAYGAAAQRRQ. Y152 is a binding site for thiamine diphosphate. K(+) is bound by residues G178, L180, T181, C228, and D231. An N6-acetyllysine modification is found at K232. N233 contributes to the K(+) binding site. An N6-acetyllysine modification is found at K241.

In terms of assembly, heterotetramer of 2 alpha/BCKDHA and 2 beta chains/BCKDHB that forms the branched-chain alpha-keto acid decarboxylase (E1) component of the BCKD complex. The branched-chain alpha-ketoacid dehydrogenase is a large complex composed of three major building blocks E1, E2 and E3. It is organized around E2, a 24-meric cubic core composed of DBT, to which are associated 6 to 12 copies of E1, and approximately 6 copies of the dehydrogenase E3, a DLD dimer. Thiamine diphosphate is required as a cofactor.

Its subcellular location is the mitochondrion matrix. It carries out the reaction N(6)-[(R)-lipoyl]-L-lysyl-[protein] + 3-methyl-2-oxobutanoate + H(+) = N(6)-[(R)-S(8)-2-methylpropanoyldihydrolipoyl]-L-lysyl-[protein] + CO2. Its function is as follows. Together with BCKDHA forms the heterotetrameric E1 subunit of the mitochondrial branched-chain alpha-ketoacid dehydrogenase (BCKD) complex. The BCKD complex catalyzes the multi-step oxidative decarboxylation of alpha-ketoacids derived from the branched-chain amino-acids valine, leucine and isoleucine producing CO2 and acyl-CoA which is subsequently utilized to produce energy. The E1 subunit catalyzes the first step with the decarboxylation of the alpha-ketoacid forming an enzyme-product intermediate. A reductive acylation mediated by the lipoylamide cofactor of E2 extracts the acyl group from the E1 active site for the next step of the reaction. The protein is 2-oxoisovalerate dehydrogenase subunit beta, mitochondrial (BCKDHB) of Bos taurus (Bovine).